A 197-amino-acid polypeptide reads, in one-letter code: MLQHAPTLTRLVGELKKLPGIGERTALRLAFHLLKSPQNLGSLAEALTQVQERVCACSVCFALTEQNPCPICSGGRDSSVICVVETSQDMLALERSNAYHGSYHVLQGAISPLHGVNPDDLRIRELLMRIEQGKVEEVVIATNFTVEGETTALYLARQLKPLGIRVTRLAHGIPLGSDIEFVDPATVQWAMKGRSEL.

The C4-type zinc-finger motif lies at 57–72 (CSVCFALTEQNPCPIC). Residues 79–174 (SVICVVETSQ…RVTRLAHGIP (96 aa)) form the Toprim domain.

It belongs to the RecR family.

May play a role in DNA repair. It seems to be involved in an RecBC-independent recombinational process of DNA repair. It may act with RecF and RecO. This is Recombination protein RecR from Trichlorobacter lovleyi (strain ATCC BAA-1151 / DSM 17278 / SZ) (Geobacter lovleyi).